Consider the following 194-residue polypeptide: dCTP deaminase (194 aa).

Residues 110–115 (RSSLAR), D128, 136–138 (VLE), Y171, K178, and Q182 contribute to the dCTP site. The active-site Proton donor/acceptor is the E138.

It belongs to the dCTP deaminase family. As to quaternary structure, homotrimer.

It carries out the reaction dCTP + H2O + H(+) = dUTP + NH4(+). The protein operates within pyrimidine metabolism; dUMP biosynthesis; dUMP from dCTP (dUTP route): step 1/2. In terms of biological role, catalyzes the deamination of dCTP to dUTP. The protein is dCTP deaminase of Haemophilus ducreyi (strain 35000HP / ATCC 700724).